Reading from the N-terminus, the 419-residue chain is UDP-N-acetylglucosamine 1-carboxyvinyltransferase 2 (419 aa).

24 to 25 (KN) is a binding site for phosphoenolpyruvate. Arginine 94 is a binding site for UDP-N-acetyl-alpha-D-glucosamine. The active-site Proton donor is the cysteine 118. Cysteine 118 carries the post-translational modification 2-(S-cysteinyl)pyruvic acid O-phosphothioketal. Residues 123–127 (RPIDQ), aspartate 307, and isoleucine 329 each bind UDP-N-acetyl-alpha-D-glucosamine.

It belongs to the EPSP synthase family. MurA subfamily.

The protein localises to the cytoplasm. The enzyme catalyses phosphoenolpyruvate + UDP-N-acetyl-alpha-D-glucosamine = UDP-N-acetyl-3-O-(1-carboxyvinyl)-alpha-D-glucosamine + phosphate. It participates in cell wall biogenesis; peptidoglycan biosynthesis. Functionally, cell wall formation. Adds enolpyruvyl to UDP-N-acetylglucosamine. This Staphylococcus epidermidis (strain ATCC 35984 / DSM 28319 / BCRC 17069 / CCUG 31568 / BM 3577 / RP62A) protein is UDP-N-acetylglucosamine 1-carboxyvinyltransferase 2.